The primary structure comprises 874 residues: Alanine--tRNA ligase (874 aa).

Histidine 562, histidine 566, cysteine 665, and histidine 669 together coordinate Zn(2+).

It belongs to the class-II aminoacyl-tRNA synthetase family. The cofactor is Zn(2+).

Its subcellular location is the cytoplasm. It catalyses the reaction tRNA(Ala) + L-alanine + ATP = L-alanyl-tRNA(Ala) + AMP + diphosphate. In terms of biological role, catalyzes the attachment of alanine to tRNA(Ala) in a two-step reaction: alanine is first activated by ATP to form Ala-AMP and then transferred to the acceptor end of tRNA(Ala). Also edits incorrectly charged Ser-tRNA(Ala) and Gly-tRNA(Ala) via its editing domain. The polypeptide is Alanine--tRNA ligase (Pseudomonas putida (strain GB-1)).